We begin with the raw amino-acid sequence, 650 residues long: SPARC-like protein 1 (650 aa).

A signal peptide spans 1–16; the sequence is MKAVLLLLCALGTAVA. A disordered region spans residues 51–352; that stretch reads TADIENHPSD…HGAGDDYFIP (302 aa). Residues 54–64 are compositionally biased toward basic and acidic residues; that stretch reads IENHPSDKAEK. 3 positions are modified to phosphoserine: Ser70, Ser78, and Ser86. The segment covering 75–85 has biased composition (basic and acidic residues); it reads HEQSTEQDKTY. Residues 91-101 show a composition bias toward acidic residues; that stretch reads LKDEEDGDGDL. Polar residues-rich tracts occupy residues 116 to 126 and 135 to 148; these read EGTSEPQQKSL and TVST…QRAN. A glycan (N-linked (GlcNAc...) asparagine) is linked at Asn148. 2 positions are modified to phosphoserine: Ser155 and Ser163. Over residues 157 to 174 the composition is skewed to polar residues; that stretch reads EQPVSDSHQQPNESSKQT. An N-linked (GlcNAc...) asparagine glycan is attached at Asn168. The segment covering 189–210 has biased composition (acidic residues); it reads IPNEEEEEEEDEEEEEEEEPED. Ser272 is modified (phosphoserine). Basic and acidic residues predominate over residues 277 to 299; sequence EDKAAGSKEHIPHTEQQDQEGKA. Position 353 is a phosphoserine (Ser353). The segment at 375–415 is disordered; sequence EETTTGESENRREAADNQEAKKAESSPNAEPSDEGNSREHS. Residues 382–398 are compositionally biased toward basic and acidic residues; the sequence is SENRREAADNQEAKKAE. Position 406 is a phosphoserine (Ser406). A Follistatin-like domain is found at 418 to 440; sequence SCTNFQCKRGHICKTDPQGKPHC. Cystine bridges form between Cys419/Cys430, Cys424/Cys440, Cys442/Cys476, Cys448/Cys469, Cys458/Cys495, Cys501/Cys612, and Cys620/Cys636. The region spanning 436–497 is the Kazal-like domain; the sequence is GKPHCVCQDP…QLDYFGACKS (62 aa). The N-linked (GlcNAc...) asparagine glycan is linked to Asn462. The 36-residue stretch at 608–643 folds into the EF-hand domain; that stretch reads PMEHCITRFFEECDPNKDKHITLKEWGHCFGIKEED. Asp621, Asn623, Asp625, His627, and Glu632 together coordinate Ca(2+).

The protein belongs to the SPARC family. As to expression, highest expression in brain. Moderate levels in heart, adrenal gland, epididymis and lung. Low levels in kidney, eye, liver, spleen, submandibular gland and testis.

Its subcellular location is the secreted. It localises to the extracellular space. It is found in the extracellular matrix. The protein is SPARC-like protein 1 (Sparcl1) of Mus musculus (Mouse).